Consider the following 264-residue polypeptide: MTTPSPSDALLIAGKRYRSRLLTGTGKFKDLDETRLATEAAAAEIVTVAIRRVNIGQDPNAPSLLDVLPPDRYTLLPNTAGCYSAEDAVRTCRLARELLDGHNLTKLEVLGDERTLYPDVVQTLKAAEQLVADGFEVMVYTSDDPILAKRLEEIGCVAVMPLAAPIGSGLGIQNKYNLLEIIENAKVPIIVDAGVGTASDAAIAMELGCDGVLMNTAIAGARDPILMASAMRKAIEAGREAFLAGRIPRKRYASASSPVDGVIG.

The active-site Schiff-base intermediate with DXP is Lys106. 1-deoxy-D-xylulose 5-phosphate-binding positions include Gly167, 193 to 194 (AG), and 215 to 216 (NT).

It belongs to the ThiG family. As to quaternary structure, homotetramer. Forms heterodimers with either ThiH or ThiS.

The protein localises to the cytoplasm. It carries out the reaction [ThiS sulfur-carrier protein]-C-terminal-Gly-aminoethanethioate + 2-iminoacetate + 1-deoxy-D-xylulose 5-phosphate = [ThiS sulfur-carrier protein]-C-terminal Gly-Gly + 2-[(2R,5Z)-2-carboxy-4-methylthiazol-5(2H)-ylidene]ethyl phosphate + 2 H2O + H(+). The protein operates within cofactor biosynthesis; thiamine diphosphate biosynthesis. In terms of biological role, catalyzes the rearrangement of 1-deoxy-D-xylulose 5-phosphate (DXP) to produce the thiazole phosphate moiety of thiamine. Sulfur is provided by the thiocarboxylate moiety of the carrier protein ThiS. In vitro, sulfur can be provided by H(2)S. The polypeptide is Thiazole synthase (Xanthomonas oryzae pv. oryzae (strain MAFF 311018)).